Here is a 333-residue protein sequence, read N- to C-terminus: Ketol-acid reductoisomerase (NADP(+)) (333 aa).

Residues 2 to 182 (AKIFYDSDCN…GASRAGIILT (181 aa)) enclose the KARI N-terminal Rossmann domain. NADP(+)-binding positions include 25–28 (FGSQ), Ser51, Ser53, and 83–86 (DEKQ). His108 is an active-site residue. Gly134 is a binding site for NADP(+). The KARI C-terminal knotted domain occupies 183 to 328 (TFKEETETDL…KELRKMMPWI (146 aa)). The Mg(2+) site is built by Asp191, Glu195, Glu227, and Glu231. Residue Ser252 coordinates substrate.

Belongs to the ketol-acid reductoisomerase family. It depends on Mg(2+) as a cofactor.

The catalysed reaction is (2R)-2,3-dihydroxy-3-methylbutanoate + NADP(+) = (2S)-2-acetolactate + NADPH + H(+). It catalyses the reaction (2R,3R)-2,3-dihydroxy-3-methylpentanoate + NADP(+) = (S)-2-ethyl-2-hydroxy-3-oxobutanoate + NADPH + H(+). It participates in amino-acid biosynthesis; L-isoleucine biosynthesis; L-isoleucine from 2-oxobutanoate: step 2/4. It functions in the pathway amino-acid biosynthesis; L-valine biosynthesis; L-valine from pyruvate: step 2/4. Its function is as follows. Involved in the biosynthesis of branched-chain amino acids (BCAA). Catalyzes an alkyl-migration followed by a ketol-acid reduction of (S)-2-acetolactate (S2AL) to yield (R)-2,3-dihydroxy-isovalerate. In the isomerase reaction, S2AL is rearranged via a Mg-dependent methyl migration to produce 3-hydroxy-3-methyl-2-ketobutyrate (HMKB). In the reductase reaction, this 2-ketoacid undergoes a metal-dependent reduction by NADPH to yield (R)-2,3-dihydroxy-isovalerate. The chain is Ketol-acid reductoisomerase (NADP(+)) from Caldicellulosiruptor bescii (strain ATCC BAA-1888 / DSM 6725 / KCTC 15123 / Z-1320) (Anaerocellum thermophilum).